Here is a 102-residue protein sequence, read N- to C-terminus: Defensin-like protein 285 (102 aa).

Residues 1–28 (MTNLYFKTAFLLSLLLLSFSYQSKLIEA) form the signal peptide. Disulfide bonds link cysteine 39-cysteine 100, cysteine 64-cysteine 83, cysteine 70-cysteine 88, and cysteine 75-cysteine 90.

The protein belongs to the DEFL family.

The protein localises to the secreted. This chain is Defensin-like protein 285, found in Arabidopsis thaliana (Mouse-ear cress).